A 578-amino-acid polypeptide reads, in one-letter code: Protein O-linked-mannose beta-1,4-N-acetylglucosaminyltransferase 2 (578 aa).

Over 1–4 the chain is Cytoplasmic; that stretch reads MNIS. Residues 5–25 traverse the membrane as a helical; Signal-anchor for type II membrane protein segment; sequence AVFSALLVSIMAAVLWKHVKL. The Lumenal portion of the chain corresponds to 26–578; it reads LDQFYVIEEE…PFAEVLVCST (553 aa). N98, N275, N335, N451, N541, and N563 each carry an N-linked (GlcNAc...) asparagine glycan. One can recognise a Fibronectin type-III domain in the interval 484–578; sequence RESKCQASAQ…PFAEVLVCST (95 aa).

The protein belongs to the glycosyltransferase 61 family.

It is found in the endoplasmic reticulum membrane. The enzyme catalyses 3-O-(alpha-D-mannosyl)-L-threonyl-[protein] + UDP-N-acetyl-alpha-D-glucosamine = 3-O-(N-acetyl-beta-D-glucosaminyl-(1-&gt;4)-alpha-D-mannosyl)-L-threonyl-[protein] + UDP + H(+). The protein operates within protein modification; protein glycosylation. Its function is as follows. O-linked mannose beta-1,4-N-acetylglucosaminyltransferase that transfers UDP-N-acetyl-D-glucosamine to the 4-position of the mannose to generate N-acetyl-D-glucosamine-beta-1,4-O-D-mannosylprotein. Involved in the biosynthesis of the phosphorylated O-mannosyl trisaccharide (N-acetylgalactosamine-beta-3-N-acetylglucosamine-beta-4-(phosphate-6-)mannose), a carbohydrate structure present in alpha-dystroglycan (DAG1), which is required for binding laminin G-like domain-containing extracellular proteins with high affinity. The polypeptide is Protein O-linked-mannose beta-1,4-N-acetylglucosaminyltransferase 2 (pomgnt2) (Xenopus laevis (African clawed frog)).